The following is a 365-amino-acid chain: MNENHYLLLTPGPLTTTKTVKEVMLYDWCTWDVEYNTMVQDVRNRLVSLATKEEEKYTTVLMQGSGTFSVEAVIGSVIPRKGKLLVCTNGAYGKRIVQMAEMLHIDVVVSQTEEWEPTNIAEVEQLLQQDKEITHIVVVHCETTTGIINPIVDVCKLGKKYGKVTLVDAMSSFGGIEIDIAELQIDFLISSANKCIQGVPGFGFVIANRDELLKCKGQARSLSLDLYDQWETMEEQNGKWRFTSPTHVVHAFYQALLELEEEGGVRARYNRYYSNQKLLVHKMKEMGFKPLVDEKYQSPIITSFIYPEAGFEFLQLYNELKRYGFVIYPGKISKVDTFRIGNIGDVHEDDINRLVDSIAKGVVIG.

Residue Lys-194 is modified to N6-(pyridoxal phosphate)lysine.

It belongs to the class-V pyridoxal-phosphate-dependent aminotransferase family. PhnW subfamily. As to quaternary structure, homodimer. The cofactor is pyridoxal 5'-phosphate.

The enzyme catalyses (2-aminoethyl)phosphonate + pyruvate = phosphonoacetaldehyde + L-alanine. Involved in phosphonate degradation. The sequence is that of 2-aminoethylphosphonate--pyruvate transaminase from Bacillus mycoides (strain KBAB4) (Bacillus weihenstephanensis).